The primary structure comprises 271 residues: tRNA pseudouridine synthase A (271 aa).

Asp56 serves as the catalytic Nucleophile. Substrate is bound at residue Tyr120.

This sequence belongs to the tRNA pseudouridine synthase TruA family. As to quaternary structure, homodimer.

The enzyme catalyses uridine(38/39/40) in tRNA = pseudouridine(38/39/40) in tRNA. Its function is as follows. Formation of pseudouridine at positions 38, 39 and 40 in the anticodon stem and loop of transfer RNAs. This is tRNA pseudouridine synthase A from Janthinobacterium sp. (strain Marseille) (Minibacterium massiliensis).